We begin with the raw amino-acid sequence, 255 residues long: Triosephosphate isomerase (255 aa).

9 to 11 (NWK) is a binding site for substrate. Residue histidine 95 is the Electrophile of the active site. Glutamate 167 acts as the Proton acceptor in catalysis. Residues glycine 173, serine 212, and 233-234 (GG) each bind substrate.

Belongs to the triosephosphate isomerase family. Homodimer.

Its subcellular location is the cytoplasm. It carries out the reaction D-glyceraldehyde 3-phosphate = dihydroxyacetone phosphate. Its pathway is carbohydrate biosynthesis; gluconeogenesis. It functions in the pathway carbohydrate degradation; glycolysis; D-glyceraldehyde 3-phosphate from glycerone phosphate: step 1/1. Functionally, involved in the gluconeogenesis. Catalyzes stereospecifically the conversion of dihydroxyacetone phosphate (DHAP) to D-glyceraldehyde-3-phosphate (G3P). In Pectobacterium atrosepticum (strain SCRI 1043 / ATCC BAA-672) (Erwinia carotovora subsp. atroseptica), this protein is Triosephosphate isomerase.